The sequence spans 399 residues: 3-phosphoshikimate 1-carboxyvinyltransferase (399 aa).

3-phosphoshikimate-binding residues include K19, S20, and R24. K19 serves as a coordination point for phosphoenolpyruvate. Positions 83 and 111 each coordinate phosphoenolpyruvate. The 3-phosphoshikimate site is built by S152, S153, Q154, D288, Q310, and K314. Q154 serves as a coordination point for phosphoenolpyruvate. The Proton acceptor role is filled by D288. The phosphoenolpyruvate site is built by R318, R359, and K385.

It belongs to the EPSP synthase family. Monomer.

The protein resides in the cytoplasm. It carries out the reaction 3-phosphoshikimate + phosphoenolpyruvate = 5-O-(1-carboxyvinyl)-3-phosphoshikimate + phosphate. The protein operates within metabolic intermediate biosynthesis; chorismate biosynthesis. Functionally, catalyzes the transfer of the enolpyruvyl moiety of phosphoenolpyruvate (PEP) to the 5-hydroxyl of shikimate-3-phosphate (S3P) to produce enolpyruvyl shikimate-3-phosphate and inorganic phosphate. The sequence is that of 3-phosphoshikimate 1-carboxyvinyltransferase from Thermococcus kodakarensis (strain ATCC BAA-918 / JCM 12380 / KOD1) (Pyrococcus kodakaraensis (strain KOD1)).